The following is a 148-amino-acid chain: Lysozyme C-3 (148 aa).

The N-terminal stretch at 1–18 is a signal peptide; that stretch reads MKTLLVLALLLLSVSVQA. A C-type lysozyme domain is found at 19 to 148; sequence KVYDRCEFAR…VSQYIRGCKL (130 aa). Cystine bridges form between C24-C146, C48-C134, C83-C99, and C95-C113. Active-site residues include E53 and D71.

Belongs to the glycosyl hydrolase 22 family. Monomer.

It is found in the secreted. It catalyses the reaction Hydrolysis of (1-&gt;4)-beta-linkages between N-acetylmuramic acid and N-acetyl-D-glucosamine residues in a peptidoglycan and between N-acetyl-D-glucosamine residues in chitodextrins.. In terms of biological role, lysozymes have primarily a bacteriolytic function; those in tissues and body fluids are associated with the monocyte-macrophage system and enhance the activity of immunoagents. The polypeptide is Lysozyme C-3 (Sus scrofa (Pig)).